Here is an 81-residue protein sequence, read N- to C-terminus: Small ribosomal subunit protein bS16 (81 aa).

Belongs to the bacterial ribosomal protein bS16 family.

The chain is Small ribosomal subunit protein bS16 from Agathobacter rectalis (strain ATCC 33656 / DSM 3377 / JCM 17463 / KCTC 5835 / VPI 0990) (Eubacterium rectale).